The primary structure comprises 253 residues: MTTIDLNCDLGESFGAYKMGNDDKILPFVSSINVACGFHAGDPSVMRQTVEKAMQHNVAIGAHPGFPDLIGFGRRNMNVSASEIYDYVLYQIGALDAFVKAAGGKMQHVKPHGALYNMAATNPEIADAIAKAIYHINPSLLLYGLANSEAFIQAAEKYNITLVQEAFADRTYKQDGTLTSRTEENALIKNEEEAIKQVLQMVKEGYVNSVNGEKVAVQAQTICLHGDGEKAVQFAKRIYRTFEHNGISICAPK.

Belongs to the LamB/PxpA family. As to quaternary structure, forms a complex composed of PxpA, PxpB and PxpC.

It carries out the reaction 5-oxo-L-proline + ATP + 2 H2O = L-glutamate + ADP + phosphate + H(+). Functionally, catalyzes the cleavage of 5-oxoproline to form L-glutamate coupled to the hydrolysis of ATP to ADP and inorganic phosphate. This is 5-oxoprolinase subunit A from Bacillus thuringiensis subsp. konkukian (strain 97-27).